The chain runs to 557 residues: Potassium-transporting ATPase potassium-binding subunit (557 aa).

The next 12 helical transmembrane spans lie at 5 to 25 (GFLL…PLGS), 63 to 83 (LCAI…MLLG), 132 to 152 (GLTV…FALI), 170 to 190 (LLRI…LFFI), 253 to 273 (FVQM…FGEV), 283 to 303 (LLWA…WAEV), 329 to 349 (VLVS…AVIA), 356 to 376 (ALGG…FGGV), 379 to 399 (GLYG…LMIG), 416 to 436 (LTAL…ALAM), 484 to 504 (LLAF…MAIA), and 526 to 546 (LFVG…FIPA).

Belongs to the KdpA family. The system is composed of three essential subunits: KdpA, KdpB and KdpC.

It is found in the cell inner membrane. Part of the high-affinity ATP-driven potassium transport (or Kdp) system, which catalyzes the hydrolysis of ATP coupled with the electrogenic transport of potassium into the cytoplasm. This subunit binds the periplasmic potassium ions and delivers the ions to the membrane domain of KdpB through an intramembrane tunnel. The chain is Potassium-transporting ATPase potassium-binding subunit from Escherichia coli O139:H28 (strain E24377A / ETEC).